A 179-amino-acid chain; its full sequence is Protein HEADING DATE 3A (179 aa).

This sequence belongs to the phosphatidylethanolamine-binding protein family. Expressed in the inner region of the SAM, stem and leaf blade vascular tissues (at protein level).

Its subcellular location is the cytoplasm. It is found in the nucleus. Probable mobile flower-promoting signal (florigen) that moves from the leaf to the shoot apical meristem (SAM) and induces flowering. Promotes the transition from vegetative growth to flowering downstream of HD1 and EHD1 under short day (SD) conditions. Acts upstream of MADS14 and MADS15. The sequence is that of Protein HEADING DATE 3A (HD3A) from Oryza sativa subsp. japonica (Rice).